We begin with the raw amino-acid sequence, 748 residues long: Transcription factor FBD3 (748 aa).

Over residues 1–10 (MPEQPRRPSD) the composition is skewed to basic and acidic residues. The disordered stretch occupies residues 1-26 (MPEQPRRPSDQEQNQSETGPPTNKRR). The segment covering 11 to 21 (QEQNQSETGPP) has biased composition (polar residues). Residues 32–59 (CNACRSRKSRCDGQRPSCSSCLSLGFDC) constitute a DNA-binding region (zn(2)-C6 fungal-type). 2 disordered regions span residues 116 to 160 (GTIN…EGIP) and 417 to 438 (IPDEQMMRREPSSGRSPATSGN). Over residues 131 to 141 (APTKASAPSGA) the composition is skewed to low complexity. Residues 429–438 (SGRSPATSGN) show a composition bias toward polar residues.

The protein localises to the nucleus. In terms of biological role, transcription factor; part of the Fusarium detoxification of benzoxazolinone cluster 2 (FDB2) involved in the degradation of benzoxazolinones produced by the host plant. Maize, wheat, and rye produce the 2 benzoxazinone phytoanticipins 2,4-dihy-droxy-7-methoxy-1,4-benzoxazin-3-one (DIMBOA) and 2,4-dihydroxy-1,4-benzoxazin-3-one (DIBOA) that, due to their inherent instability once released, spontaneously degrade to the more stable corresponding benzoxazolinones, 6-methoxy-2-benzoxazolinone (MBOA) and 2-benzoxazolinone (BOA), respectively. FDB3 is not essentiel, but contributes to efficient BOA biotransformation. This chain is Transcription factor FBD3, found in Gibberella moniliformis (strain M3125 / FGSC 7600) (Maize ear and stalk rot fungus).